We begin with the raw amino-acid sequence, 272 residues long: 2-amino-3,7-dideoxy-D-threo-hept-6-ulosonate synthase (272 aa).

Asp33 serves as the catalytic Proton acceptor. 1-deoxy-D-threo-hexo-2,5-diulose 6-phosphate contacts are provided by residues 33-37 (DHGVS) and 153-155 (YPR). The Proton donor role is filled by Tyr153. The active-site Schiff-base intermediate with substrate is Lys184. 1-deoxy-D-threo-hexo-2,5-diulose 6-phosphate contacts are provided by residues 209 to 210 (GG) and 237 to 238 (GR).

Belongs to the DeoC/FbaB aldolase family. ADHS subfamily. In terms of assembly, homodecamer.

The enzyme catalyses 1-deoxy-D-threo-hexo-2,5-diulose 6-phosphate + L-aspartate 4-semialdehyde = 2,3-dioxopropyl phosphate + 2-amino-2,3,7-trideoxy-D-lyxo-hept-6-ulosonate. Catalyzes a transaldol reaction between 6-deoxy-5-ketofructose 1-phosphate (DKFP) and L-aspartate semialdehyde (ASA) with an elimination of hydroxypyruvaldehyde phosphate to yield 2-amino-3,7-dideoxy-D-threo-hept-6-ulosonate (ADH). Plays a key role in an alternative pathway of the biosynthesis of 3-dehydroquinate (DHQ), which is involved in the canonical pathway for the biosynthesis of aromatic amino acids and which is also a precursor for the biosynthesis of p-aminobenzoic acid (PABA) in M.maripaludis. Does not possess fructose-bisphosphate (FBP) aldolase activity. The sequence is that of 2-amino-3,7-dideoxy-D-threo-hept-6-ulosonate synthase from Methanococcus maripaludis (strain DSM 14266 / JCM 13030 / NBRC 101832 / S2 / LL).